The sequence spans 37 residues: Large ribosomal subunit protein bL36c (37 aa).

The protein belongs to the bacterial ribosomal protein bL36 family.

Its subcellular location is the plastid. It localises to the chloroplast. This is Large ribosomal subunit protein bL36c from Lolium perenne (Perennial ryegrass).